Here is a 489-residue protein sequence, read N- to C-terminus: Glutamyl-tRNA(Gln) amidotransferase subunit A (489 aa).

Active-site charge relay system residues include K75 and S150. The active-site Acyl-ester intermediate is S174.

Belongs to the amidase family. GatA subfamily. In terms of assembly, heterotrimer of A, B and C subunits.

It catalyses the reaction L-glutamyl-tRNA(Gln) + L-glutamine + ATP + H2O = L-glutaminyl-tRNA(Gln) + L-glutamate + ADP + phosphate + H(+). Allows the formation of correctly charged Gln-tRNA(Gln) through the transamidation of misacylated Glu-tRNA(Gln) in organisms which lack glutaminyl-tRNA synthetase. The reaction takes place in the presence of glutamine and ATP through an activated gamma-phospho-Glu-tRNA(Gln). The sequence is that of Glutamyl-tRNA(Gln) amidotransferase subunit A from Gloeobacter violaceus (strain ATCC 29082 / PCC 7421).